The chain runs to 101 residues: NADH-quinone oxidoreductase subunit K (101 aa).

3 helical membrane-spanning segments follow: residues 5–25 (LGQV…GVLL), 29–49 (LIMI…VLVG), and 62–82 (VALL…ALVV).

It belongs to the complex I subunit 4L family. In terms of assembly, NDH-1 is composed of 14 different subunits. Subunits NuoA, H, J, K, L, M, N constitute the membrane sector of the complex.

It is found in the cell inner membrane. The catalysed reaction is a quinone + NADH + 5 H(+)(in) = a quinol + NAD(+) + 4 H(+)(out). Functionally, NDH-1 shuttles electrons from NADH, via FMN and iron-sulfur (Fe-S) centers, to quinones in the respiratory chain. The immediate electron acceptor for the enzyme in this species is believed to be ubiquinone. Couples the redox reaction to proton translocation (for every two electrons transferred, four hydrogen ions are translocated across the cytoplasmic membrane), and thus conserves the redox energy in a proton gradient. This is NADH-quinone oxidoreductase subunit K from Syntrophotalea carbinolica (strain DSM 2380 / NBRC 103641 / GraBd1) (Pelobacter carbinolicus).